A 1018-amino-acid polypeptide reads, in one-letter code: Contactin-1 (1018 aa).

The signal sequence occupies residues 1–20; that stretch reads MKMWLLVSHLVIISITTCLA. Ig-like C2-type domains follow at residues 41 to 131, 137 to 223, 241 to 326, 331 to 407, 413 to 500, and 504 to 601; these read PIFE…ATLS, PFPP…KSVF, PADI…ARIY, PEWV…AELK, PTFE…GTLV, and PTRI…LVVR. 2 disulfide bridges follow: cysteine 65-cysteine 114 and cysteine 158-cysteine 211. N-linked (GlcNAc...) asparagine glycosylation is found at asparagine 208 and asparagine 258. Cysteine 263 and cysteine 310 are joined by a disulfide. An N-linked (GlcNAc...) asparagine glycan is attached at asparagine 338. Cystine bridges form between cysteine 352–cysteine 391 and cysteine 436–cysteine 484. N-linked (GlcNAc...) asparagine glycosylation is found at asparagine 457 and asparagine 473. A glycan (N-linked (GlcNAc...) (complex) asparagine) is linked at asparagine 494. Asparagine 521 is a glycosylation site (N-linked (GlcNAc...) asparagine). A disulfide bond links cysteine 526 and cysteine 583. Residue asparagine 591 is glycosylated (N-linked (GlcNAc...) asparagine). Fibronectin type-III domains lie at 606–704, 709–806, 811–906, and 907–1000; these read PPGG…TDGA, APSD…SAQD, APTE…APPS, and QPPR…TLSP. The interval 693–717 is disordered; that stretch reads SIPSNRIKTDGAAPNVAPSDVGGGG. N-linked (GlcNAc...) asparagine glycosylation is present at asparagine 933. Serine 993 is lipidated: GPI-anchor amidated serine. Residues 994–1018 constitute a propeptide, removed in mature form; the sequence is GAPTLSPSLLGLLLPAFGILVYLEF.

This sequence belongs to the immunoglobulin superfamily. Contactin family. As to quaternary structure, monomer. Interacts with CNTNAP1 in cis form. Binds to the carbonic-anhydrase like domain of PTPRZ1. Interacts with NOTCH1 and TNR. Detected in a complex with NRCAM and PTPRB. Interacts with TASOR. Strongly expressed in brain and in neuroblastoma and retinoblastoma cell lines. Lower levels of expression in lung, pancreas, kidney and skeletal muscle.

Its subcellular location is the cell membrane. Functionally, contactins mediate cell surface interactions during nervous system development. Involved in the formation of paranodal axo-glial junctions in myelinated peripheral nerves and in the signaling between axons and myelinating glial cells via its association with CNTNAP1. Participates in oligodendrocytes generation by acting as a ligand of NOTCH1. Its association with NOTCH1 promotes NOTCH1 activation through the released notch intracellular domain (NICD) and subsequent translocation to the nucleus. Interaction with TNR induces a repulsion of neurons and an inhibition of neurite outgrowth. This is Contactin-1 (CNTN1) from Homo sapiens (Human).